The following is a 322-amino-acid chain: MSTNFEKHFEVDVDNCSLEQLRDILVNNSGKAPLANRFRALFNLKGHAEEFASKPEDALKATQYLAEAFGDESELLKHEVAYVLGQTKNMAGAPLLRDVLADDKQQCMVRHEAAEALGALNDVDSLDILEKYFKEDPLLEIRQTCELAIDRIKWETSEEGRREALQESLYSSIDPAPPFSLEKDYKIQELKDILNDQNRPLFERYRAMFRLRDIGNDEACLALASGFDDPSALFKHEIAYVFGQICNPVVVPHLKEVLARPEEAPMVRHEAAEALGSIATDDVLPVLKEHLKDSDSVVRESAIVALDMYEYENSNDLEYAPV.

HEAT-like PBS-type repeat units lie at residues 76-102 (LKHEVAYVLGQTKNMAGAPLLRDVLAD) and 109-135 (VRHEAAEALGALNDVDSLDILEKYFKE). Fe cation-binding residues include histidine 78, glutamate 79, histidine 111, glutamate 112, histidine 236, glutamate 237, histidine 269, and glutamate 270. Residues 267-293 (VRHEAAEALGSIATDDVLPVLKEHLKD) form an HEAT-like PBS-type 3 repeat.

The protein belongs to the deoxyhypusine hydroxylase family. Fe(2+) is required as a cofactor.

It localises to the cytoplasm. The protein localises to the nucleus. It catalyses the reaction [eIF5A protein]-deoxyhypusine + AH2 + O2 = [eIF5A protein]-hypusine + A + H2O. Its pathway is protein modification; eIF5A hypusination. Catalyzes the hydroxylation of the N(6)-(4-aminobutyl)-L-lysine intermediate to form hypusine, an essential post-translational modification only found in mature eIF-5A factor. In Kluyveromyces lactis (strain ATCC 8585 / CBS 2359 / DSM 70799 / NBRC 1267 / NRRL Y-1140 / WM37) (Yeast), this protein is Deoxyhypusine hydroxylase.